The primary structure comprises 85 residues: U4-theraphotoxin-Hhn1d (85 aa).

Residues 1–22 form the signal peptide; that stretch reads MKVTLIAILTCAAVLVLHTTAA. A propeptide spanning residues 23 to 48 is cleaved from the precursor; the sequence is EELEAESQLMEVGMPDTELAAVDEER. 3 disulfide bridges follow: Cys52–Cys66, Cys56–Cys77, and Cys71–Cys82.

The protein belongs to the neurotoxin 12 (Hwtx-2) family. 02 (Hwtx-2) subfamily. As to expression, expressed by the venom gland.

It is found in the secreted. Its function is as follows. Postsynaptic neurotoxin. This Cyriopagopus hainanus (Chinese bird spider) protein is U4-theraphotoxin-Hhn1d.